Here is an 815-residue protein sequence, read N- to C-terminus: MSRAIIENAGEHRVSILINGMYSIENINDVKMAYRDLLTDEDMFIFSAVAPTAYCNIDNHGRSKAAQAARDIAIANIAPDIVYVISFFEGHGDSYTVSIPADDVPWKTVCVCHDLIPLLNKERYLGDPNFREFYMNKLAEFERADAIFAISQSAAQEVIEYTDIPSDRVLNISSAVGEDFAVIDYSAEHIQSLKDKYRLPDEFILTLAMIEPRKNIEAPIHAYSMLPAELQQRYPMVLAYKVHPEGLERILRLAESYGLSRSQLIFTGFLTDDDLIALYNLCKLFVFPSLHEGFGLPPLEAMRCGAATLGSNITSLPEVIGWEDAMFNPHDVQDIRRVMEKALTDEAFYRELKAHALTQSAKFSWANTAHLAIDGFTRLLQSSKEVDAGQTEGVTTSRIQTMQKIDALSEVDRLGLAWAVARNGYKQHTRKLLVDISVLAKHDAKTGIQRVSRSILSELLKSGVPGYEVSAVYYTPGECYRYANQYLSSNFPGEYGADEPVLFSKDDILIATDLTAHLFPEVVTQIDCMRAAGAFACFVVHDILPLRRPEWSIEGIQREFPIWLSCLAEHADRLICVSASVAEDVKAWIAENSHWVKPNPLLTVSNFHLGADLDASVPSTGMPDNAQALLATMAAAPSFIMVGTMEPRKGHAQTLAAFEELWCEGKNYNLFIVGKQGWNVDSLCEKLRHHPQLNKKLFWLQNISDEFLVELYARSRALIFASQGEGFGLPLIEAAQKKLPVIIRDIPVFKEIAQEHAWYFSGEAPADIAKAVEDWLALYEQNAHPRSENINWLTWKQSAELLLKNLPIIAPAAKQ.

The segment at 1 to 374 (MSRAIIENAG…WANTAHLAID (374 aa)) is alpha-(1-&gt;2)-mannosyltransferase. The tract at residues 431-804 (KLLVDISVLA…WKQSAELLLK (374 aa)) is alpha-(1-&gt;3)-mannosyltransferase.

Belongs to the glycosyltransferase group 1 family. Glycosyltransferase 4 subfamily.

It is found in the cell inner membrane. It functions in the pathway bacterial outer membrane biogenesis; LPS O-antigen biosynthesis. Its function is as follows. Mannosyltransferase involved in the biosynthesis of the repeat unit of the lipopolysaccharide (LPS) O-antigen region. The polypeptide is Serotype-specific mannosyltransferase WbdA (Escherichia coli).